The chain runs to 264 residues: Thymidylate synthase (264 aa).

Residue R21 coordinates dUMP. H51 provides a ligand contact to (6R)-5,10-methylene-5,6,7,8-tetrahydrofolate. 126–127 (RR) contacts dUMP. Residue C146 is the Nucleophile of the active site. DUMP-binding positions include 166–169 (RSCD), N177, and 207–209 (HLY). D169 is a (6R)-5,10-methylene-5,6,7,8-tetrahydrofolate binding site. A263 is a binding site for (6R)-5,10-methylene-5,6,7,8-tetrahydrofolate.

This sequence belongs to the thymidylate synthase family. Bacterial-type ThyA subfamily. As to quaternary structure, homodimer.

The protein resides in the cytoplasm. The catalysed reaction is dUMP + (6R)-5,10-methylene-5,6,7,8-tetrahydrofolate = 7,8-dihydrofolate + dTMP. It participates in pyrimidine metabolism; dTTP biosynthesis. Functionally, catalyzes the reductive methylation of 2'-deoxyuridine-5'-monophosphate (dUMP) to 2'-deoxythymidine-5'-monophosphate (dTMP) while utilizing 5,10-methylenetetrahydrofolate (mTHF) as the methyl donor and reductant in the reaction, yielding dihydrofolate (DHF) as a by-product. This enzymatic reaction provides an intracellular de novo source of dTMP, an essential precursor for DNA biosynthesis. The chain is Thymidylate synthase from Shigella flexneri serotype 5b (strain 8401).